The primary structure comprises 293 residues: Probable metal transport system membrane protein CPn_0543/CP_0209/CPj0543/CpB0565 (293 aa).

Helical transmembrane passes span 12 to 32 (LLILLPTFLAALGASVAGGVM), 41 to 61 (IVSISGSISHAILGGIGLTLW), 68 to 88 (LSFFPMYGAIVGAIFLALCIG), 101 to 121 (LIAMIWSVGMAIGIIFISRLP), 140 to 160 (PSDLYSLGIFDLLVLGIVVLC), 183 to 203 (LWYFLLLVLTAITIVMLIYVM), and 253 to 273 (FPVGPTISLLMGLGYTASLCV).

The protein belongs to the ABC-3 integral membrane protein family.

It is found in the cell inner membrane. In terms of biological role, part of an ATP-driven transport system CPn_0541/CPn_0542/CPn_0543 for a metal. This is Probable metal transport system membrane protein CPn_0543/CP_0209/CPj0543/CpB0565 from Chlamydia pneumoniae (Chlamydophila pneumoniae).